A 318-amino-acid polypeptide reads, in one-letter code: Gamma-glutamyl hydrolase (318 aa).

A signal peptide spans 1 to 24; the sequence is MASPGCLLCVLGLLLCGAASLELS. A Gamma-glutamyl hydrolase domain is found at 25 to 318; the sequence is RPHGDTAKKP…SSFQQCYIFD (294 aa). The N-linked (GlcNAc...) asparagine glycan is linked to N116. C134 acts as the Nucleophile in catalysis. N-linked (GlcNAc...) asparagine glycosylation is found at N163 and N203. The Proton donor role is filled by H244. An N-linked (GlcNAc...) asparagine; partial glycan is attached at N307.

Belongs to the peptidase C26 family. As to quaternary structure, homodimer.

It is found in the secreted. The protein localises to the extracellular space. The protein resides in the lysosome. Its subcellular location is the melanosome. It carries out the reaction (6S)-5,6,7,8-tetrahydrofolyl-(gamma-L-Glu)(n) + (n-1) H2O = (6S)-5,6,7,8-tetrahydrofolate + (n-1) L-glutamate. In terms of biological role, hydrolyzes the polyglutamate sidechains of pteroylpolyglutamates. Progressively removes gamma-glutamyl residues from pteroylpoly-gamma-glutamate to yield pteroyl-alpha-glutamate (folic acid) and free glutamate. May play an important role in the bioavailability of dietary pteroylpolyglutamates and in the metabolism of pteroylpolyglutamates and antifolates. In Homo sapiens (Human), this protein is Gamma-glutamyl hydrolase.